A 113-amino-acid chain; its full sequence is MNRLDFVDKPSLRDDIPAFNPGDTINVHVKVIEGAKERLQVFKGVVIRRQGGGIRETFTVRKESYGVGVERTFPVHSPNIDHIEVVTRGDVRRAKLYYLRELRGKKAKIKEKR.

It belongs to the bacterial ribosomal protein bL19 family.

Its function is as follows. This protein is located at the 30S-50S ribosomal subunit interface and may play a role in the structure and function of the aminoacyl-tRNA binding site. This is Large ribosomal subunit protein bL19 (rplS) from Mycobacterium bovis (strain ATCC BAA-935 / AF2122/97).